Reading from the N-terminus, the 687-residue chain is Calcium-binding protein SP84 (687 aa).

The first 19 residues, 1–19 (MMRAIYLLVVVCWAAAANA), serve as a signal peptide directing secretion. EF-hand domains lie at 152 to 187 (LESD…HKNK), 257 to 292 (LTEI…TDDV), 406 to 441 (KTEA…PHMV), 476 to 511 (IENA…NNDA), and 579 to 614 (MTER…VKDL). Residues Asp-592, Asn-594, Asp-596, Glu-598, and Asp-603 each contribute to the Ca(2+) site.

In terms of tissue distribution, expressed in salivary glands where expression is strongest in type III cells in the posterior lobe of the principal glands (at protein level). Not expressed in midgut, Malpighian tubules or epidermis.

It is found in the secreted. Functionally, binds calcium. During feeding of the phloem sap, protein is injected into sieve tubes of rice plants. This process may suppress the sieve-element clogging and facilitate continuous ingestion from sieve tubes. This is Calcium-binding protein SP84 from Nephotettix cincticeps (Green rice leafhopper).